Here is a 1241-residue protein sequence, read N- to C-terminus: RNA polymerase II C-terminal domain phosphatase-like 3 (1241 aa).

7 disordered regions span residues 361–402 (DHDA…TTEG), 428–470 (VFKT…HLIY), 505–525 (ISAP…RDPR), 578–598 (KRQK…WLED), 677–702 (AIQK…VSTP), 720–800 (VLQD…QNGT), and 852–885 (TERD…GPTR). Positions 368 to 378 (PSPTRETTPSL) are enriched in polar residues. Low complexity predominate over residues 441-466 (GEPNDGNGDVGGEVSSSVVKSSNPGS). The segment covering 677–686 (AIQKPMDPRR) has biased composition (basic and acidic residues). Polar residues-rich tracts occupy residues 691 to 702 (PGSSVQPGVSTP) and 791 to 800 (PRQNISQNGT). Positions 871–881 (SVSAASVTAAA) are enriched in low complexity. In terms of domain architecture, FCP1 homology spans 923–1103 (FASQKLSLVL…GLLGPSLLEL (181 aa)). In terms of domain architecture, BRCT spans 1146–1239 (EQRKILAGCR…QRANENLYAI (94 aa)).

As to quaternary structure, interacts with RAP74. Mg(2+) is required as a cofactor. Requires Co(2+) as cofactor. The cofactor is Mn(2+).

It localises to the nucleus. The enzyme catalyses O-phospho-L-seryl-[protein] + H2O = L-seryl-[protein] + phosphate. The catalysed reaction is O-phospho-L-threonyl-[protein] + H2O = L-threonyl-[protein] + phosphate. Completely dephosphorylates 'Ser-2', and partially 'Ser-5' and 'Ser-7' of the heptad repeats YSPTSPS in the C-terminal domain (CTD) of the largest RNA polymerase II subunit (RPB1). Involved in defense response. Acts as a negative regulator of immune gene expression and immunity to pathogen infections. Preferentially dephosphorylates 'Ser-2' of RNA polymerase II CTD. This counterregulates the MAP kinase (MAPK) or cyclin-dependent kinase C (CDKC)-mediated phosphorylation of CTD in response to pathogens and upon perception of microbe-associated molecular patterns (MAMPs). MAPKs phosphorylate and activate CDKCs, which are CTD kinases that positively regulate plant innate immunity. Acts as a negative regulator of stress gene transcription involved in abscisic acid (ABA) mediated signaling pathway and cold resistance. Acts as a post-transcriptional gene silencing (PTGS) suppressor. The chain is RNA polymerase II C-terminal domain phosphatase-like 3 from Arabidopsis thaliana (Mouse-ear cress).